A 231-amino-acid polypeptide reads, in one-letter code: Probable septum site-determining protein MinC (231 aa).

A disordered region spans residues 102–125 (KEKAPRPAPAPQAPAQNTTPVTKT).

This sequence belongs to the MinC family. Interacts with MinD and FtsZ.

Its function is as follows. Cell division inhibitor that blocks the formation of polar Z ring septums. Rapidly oscillates between the poles of the cell to destabilize FtsZ filaments that have formed before they mature into polar Z rings. Prevents FtsZ polymerization. This is Probable septum site-determining protein MinC from Escherichia coli O6:K15:H31 (strain 536 / UPEC).